A 210-amino-acid polypeptide reads, in one-letter code: Uracil phosphoribosyltransferase (210 aa).

5-phospho-alpha-D-ribose 1-diphosphate-binding positions include R77, R102, and 129-137 (DPMLATGAS). Residues I195 and 200–202 (GDA) contribute to the uracil site. D201 contacts 5-phospho-alpha-D-ribose 1-diphosphate.

Belongs to the UPRTase family. Mg(2+) serves as cofactor.

The catalysed reaction is UMP + diphosphate = 5-phospho-alpha-D-ribose 1-diphosphate + uracil. It participates in pyrimidine metabolism; UMP biosynthesis via salvage pathway; UMP from uracil: step 1/1. Allosterically activated by GTP. Catalyzes the conversion of uracil and 5-phospho-alpha-D-ribose 1-diphosphate (PRPP) to UMP and diphosphate. This is Uracil phosphoribosyltransferase from Mycoplasmoides gallisepticum (strain R(low / passage 15 / clone 2)) (Mycoplasma gallisepticum).